A 428-amino-acid chain; its full sequence is Histidine--tRNA ligase (428 aa).

This sequence belongs to the class-II aminoacyl-tRNA synthetase family. Homodimer.

The protein resides in the cytoplasm. It catalyses the reaction tRNA(His) + L-histidine + ATP = L-histidyl-tRNA(His) + AMP + diphosphate + H(+). This is Histidine--tRNA ligase from Lactobacillus delbrueckii subsp. bulgaricus (strain ATCC BAA-365 / Lb-18).